Consider the following 932-residue polypeptide: DNA mismatch repair protein MutS (932 aa).

An ATP-binding site is contributed by 615–622; it reads GPNMAGKS.

It belongs to the DNA mismatch repair MutS family.

In terms of biological role, this protein is involved in the repair of mismatches in DNA. It is possible that it carries out the mismatch recognition step. This protein has a weak ATPase activity. The sequence is that of DNA mismatch repair protein MutS from Clostridium botulinum (strain Hall / ATCC 3502 / NCTC 13319 / Type A).